Here is a 672-residue protein sequence, read N- to C-terminus: DNA ligase (672 aa).

NAD(+)-binding positions include 37 to 41, 86 to 87, and E115; these read DAEYD and SL. Residue K117 is the N6-AMP-lysine intermediate of the active site. The NAD(+) site is built by R138, E172, K288, and K312. Zn(2+) contacts are provided by C406, C409, C424, and C429. The region spanning 590 to 672 is the BRCT domain; the sequence is DISSTFAGKT…LQEIQQSKQV (83 aa).

This sequence belongs to the NAD-dependent DNA ligase family. LigA subfamily. It depends on Mg(2+) as a cofactor. The cofactor is Mn(2+).

The enzyme catalyses NAD(+) + (deoxyribonucleotide)n-3'-hydroxyl + 5'-phospho-(deoxyribonucleotide)m = (deoxyribonucleotide)n+m + AMP + beta-nicotinamide D-nucleotide.. Its function is as follows. DNA ligase that catalyzes the formation of phosphodiester linkages between 5'-phosphoryl and 3'-hydroxyl groups in double-stranded DNA using NAD as a coenzyme and as the energy source for the reaction. It is essential for DNA replication and repair of damaged DNA. This is DNA ligase from Anoxybacillus flavithermus (strain DSM 21510 / WK1).